A 326-amino-acid chain; its full sequence is Endochitinase (326 aa).

Residues 1–25 (MVYCTASLPLLLLLLVGLLAGEAFA) form the signal peptide. Positions 26 to 66 (EQCGRQAGGALCPGGLCCSQFGWCGSTSDYCGPTCQSQCGG) constitute a Chitin-binding type-1 domain. Disulfide bonds link cysteine 28/cysteine 43, cysteine 37/cysteine 49, cysteine 42/cysteine 56, cysteine 60/cysteine 64, cysteine 96/cysteine 158, cysteine 170/cysteine 178, and cysteine 277/cysteine 309. Glutamate 140 serves as the catalytic Proton donor.

It belongs to the glycosyl hydrolase 19 family. Chitinase class I subfamily. Expressed in the pulp of the fruit (at protein level). Expressed in mesocarp (at protein level).

It catalyses the reaction Random endo-hydrolysis of N-acetyl-beta-D-glucosaminide (1-&gt;4)-beta-linkages in chitin and chitodextrins.. Its function is as follows. Defense against chitin-containing fungal pathogens. Has in vitro antifungal activity against F.oxysporum inhibiting its growth and the branching of its hyphae. Has endochitinase activity, but no exochitinase or lysozyme activities. The chain is Endochitinase from Persea americana (Avocado).